Here is a 429-residue protein sequence, read N- to C-terminus: Gamma-glutamyl phosphate reductase (429 aa).

The protein belongs to the gamma-glutamyl phosphate reductase family.

It localises to the cytoplasm. It carries out the reaction L-glutamate 5-semialdehyde + phosphate + NADP(+) = L-glutamyl 5-phosphate + NADPH + H(+). It participates in amino-acid biosynthesis; L-proline biosynthesis; L-glutamate 5-semialdehyde from L-glutamate: step 2/2. Its function is as follows. Catalyzes the NADPH-dependent reduction of L-glutamate 5-phosphate into L-glutamate 5-semialdehyde and phosphate. The product spontaneously undergoes cyclization to form 1-pyrroline-5-carboxylate. This chain is Gamma-glutamyl phosphate reductase, found in Methylibium petroleiphilum (strain ATCC BAA-1232 / LMG 22953 / PM1).